An 84-amino-acid chain; its full sequence is U8-theraphotoxin-Hhn1g (84 aa).

A signal peptide spans 1-21 (MKVVLLVCLVWMMAMMELVSC). 5 disulfides stabilise this stretch: C23–C35, C29–C44, C34–C67, C54–C75, and C69–C81.

The protein belongs to the AVIT (prokineticin) family. As to expression, expressed by the venom gland.

The protein localises to the secreted. The sequence is that of U8-theraphotoxin-Hhn1g from Cyriopagopus hainanus (Chinese bird spider).